A 736-amino-acid polypeptide reads, in one-letter code: Phosphoribosylformylglycinamidine synthase subunit PurL (736 aa).

His-49 is an active-site residue. 2 residues coordinate ATP: Tyr-52 and Lys-91. Residue Glu-93 participates in Mg(2+) binding. Substrate-binding positions include 94–97 (SHNH) and Arg-116. The Proton acceptor role is filled by His-95. Mg(2+) is bound at residue Asp-117. Gln-240 lines the substrate pocket. Position 268 (Asp-268) interacts with Mg(2+). 312 to 314 (ESQ) serves as a coordination point for substrate. Residues Asp-493 and Gly-530 each coordinate ATP. Position 531 (Asn-531) interacts with Mg(2+). Residue Ser-533 participates in substrate binding.

Belongs to the FGAMS family. Monomer. Part of the FGAM synthase complex composed of 1 PurL, 1 PurQ and 2 PurS subunits.

It is found in the cytoplasm. The enzyme catalyses N(2)-formyl-N(1)-(5-phospho-beta-D-ribosyl)glycinamide + L-glutamine + ATP + H2O = 2-formamido-N(1)-(5-O-phospho-beta-D-ribosyl)acetamidine + L-glutamate + ADP + phosphate + H(+). It functions in the pathway purine metabolism; IMP biosynthesis via de novo pathway; 5-amino-1-(5-phospho-D-ribosyl)imidazole from N(2)-formyl-N(1)-(5-phospho-D-ribosyl)glycinamide: step 1/2. Part of the phosphoribosylformylglycinamidine synthase complex involved in the purines biosynthetic pathway. Catalyzes the ATP-dependent conversion of formylglycinamide ribonucleotide (FGAR) and glutamine to yield formylglycinamidine ribonucleotide (FGAM) and glutamate. The FGAM synthase complex is composed of three subunits. PurQ produces an ammonia molecule by converting glutamine to glutamate. PurL transfers the ammonia molecule to FGAR to form FGAM in an ATP-dependent manner. PurS interacts with PurQ and PurL and is thought to assist in the transfer of the ammonia molecule from PurQ to PurL. In Rhodopseudomonas palustris (strain TIE-1), this protein is Phosphoribosylformylglycinamidine synthase subunit PurL.